A 710-amino-acid polypeptide reads, in one-letter code: Polyribonucleotide nucleotidyltransferase (710 aa).

Mg(2+) contacts are provided by Asp489 and Asp495. One can recognise a KH domain in the interval 556–615 (PKIDTIKIDVDKIKVVIGKGGETIDKIIAETGVKIDIDDEGNVSIYSSDQAAIDRTKEII). An S1 motif domain is found at 625–693 (GEVYHAKVVR…EKGRVDASMK (69 aa)). A disordered region spans residues 691 to 710 (SMKALIPRPPKPEKKEEKHD). Positions 700-710 (PKPEKKEEKHD) are enriched in basic and acidic residues.

It belongs to the polyribonucleotide nucleotidyltransferase family. Mg(2+) is required as a cofactor.

It localises to the cytoplasm. It carries out the reaction RNA(n+1) + phosphate = RNA(n) + a ribonucleoside 5'-diphosphate. Involved in mRNA degradation. Catalyzes the phosphorolysis of single-stranded polyribonucleotides processively in the 3'- to 5'-direction. The chain is Polyribonucleotide nucleotidyltransferase from Streptococcus pyogenes serotype M1.